The following is a 180-amino-acid chain: 3-deoxy-D-manno-octulosonate 8-phosphate phosphatase KdsC (180 aa).

Positions 14 and 16 each coordinate Mg(2+). Substrate-binding positions include D16, 37–41 (HVRDG), K45, R60, R68, and K84. Residue D107 participates in Mg(2+) binding.

This sequence belongs to the KdsC family. As to quaternary structure, homotetramer. Requires Mg(2+) as cofactor.

It catalyses the reaction 3-deoxy-alpha-D-manno-2-octulosonate-8-phosphate + H2O = 3-deoxy-alpha-D-manno-oct-2-ulosonate + phosphate. In terms of biological role, catalyzes the hydrolysis of 3-deoxy-D-manno-octulosonate 8-phosphate (KDO 8-P) to 3-deoxy-D-manno-octulosonate (KDO) and inorganic phosphate. This is 3-deoxy-D-manno-octulosonate 8-phosphate phosphatase KdsC from Haemophilus influenzae (strain ATCC 51907 / DSM 11121 / KW20 / Rd).